A 92-amino-acid chain; its full sequence is UPF0223 protein EF_2462 (92 aa).

The protein belongs to the UPF0223 family.

This Enterococcus faecalis (strain ATCC 700802 / V583) protein is UPF0223 protein EF_2462.